Reading from the N-terminus, the 90-residue chain is MRAVTLKATGRVQGVGFRWATKVAADKCGVNGIVRNLMDGSVFIEAEGEDQRVQVFIDVVRQSPTDFGKVKHLEVHEVEPQNYHDFRITN.

The 88-residue stretch at 3–90 (AVTLKATGRV…QNYHDFRITN (88 aa)) folds into the Acylphosphatase-like domain. Active-site residues include R18 and N36.

The protein belongs to the acylphosphatase family.

It catalyses the reaction an acyl phosphate + H2O = a carboxylate + phosphate + H(+). In Lactiplantibacillus plantarum (strain ATCC BAA-793 / NCIMB 8826 / WCFS1) (Lactobacillus plantarum), this protein is Acylphosphatase (acyP).